A 367-amino-acid polypeptide reads, in one-letter code: Quinolinate synthase (367 aa).

The iminosuccinate site is built by His45 and Ser62. Cys109 provides a ligand contact to [4Fe-4S] cluster. Residues 140-142 (YVN) and Ser161 each bind iminosuccinate. Cys229 contributes to the [4Fe-4S] cluster binding site. Residues 255-257 (HPE) and Thr272 contribute to the iminosuccinate site. Cys319 contributes to the [4Fe-4S] cluster binding site.

This sequence belongs to the quinolinate synthase family. Type 3 subfamily. Requires [4Fe-4S] cluster as cofactor.

It localises to the cytoplasm. The enzyme catalyses iminosuccinate + dihydroxyacetone phosphate = quinolinate + phosphate + 2 H2O + H(+). It functions in the pathway cofactor biosynthesis; NAD(+) biosynthesis; quinolinate from iminoaspartate: step 1/1. In terms of biological role, catalyzes the condensation of iminoaspartate with dihydroxyacetone phosphate to form quinolinate. This chain is Quinolinate synthase, found in Geobacillus sp. (strain WCH70).